A 434-amino-acid polypeptide reads, in one-letter code: Beta-enolase (434 aa).

Ala-2 is subject to N-acetylalanine. Thr-72 is modified (phosphothreonine). Residues Ser-83 and Ser-157 each carry the phosphoserine modification. Residues His-158 and Glu-167 each contribute to the substrate site. The residue at position 176 (Ser-176) is a Phosphoserine. Thr-205 is modified (phosphothreonine). The Proton donor role is filled by Glu-210. Thr-229 is modified (phosphothreonine). Tyr-236 carries the post-translational modification Phosphotyrosine. Asp-245 contacts Mg(2+). Ser-263 is modified (phosphoserine). Positions 293 and 318 each coordinate substrate. Positions 293 and 318 each coordinate Mg(2+). The active-site Proton acceptor is Lys-343. Substrate contacts are provided by residues 370–373 (SHRS) and Lys-394.

Belongs to the enolase family. Mammalian enolase is composed of 3 isozyme subunits, alpha, beta and gamma, which can form homodimers or heterodimers which are cell-type and development-specific. Interacts with PNKD. Mg(2+) is required as a cofactor.

The protein localises to the cytoplasm. It carries out the reaction (2R)-2-phosphoglycerate = phosphoenolpyruvate + H2O. It functions in the pathway carbohydrate degradation; glycolysis; pyruvate from D-glyceraldehyde 3-phosphate: step 4/5. Functionally, glycolytic enzyme that catalyzes the conversion of 2-phosphoglycerate to phosphoenolpyruvate. Appears to have a function in striated muscle development and regeneration. The polypeptide is Beta-enolase (ENO3) (Bos taurus (Bovine)).